Here is a 736-residue protein sequence, read N- to C-terminus: Catalase-peroxidase (736 aa).

The tract at residues 1-30 is disordered; sequence MGGNVMTDDKMNSVTSGANKQETGRDMSNR. Over residues 12-21 the composition is skewed to polar residues; it reads NSVTSGANKQ. Residues 101–224 constitute a cross-link (tryptophyl-tyrosyl-methioninium (Trp-Tyr) (with M-250)); it reads WHSAGTYRAG…LAAVQMGLIY (124 aa). The active-site Proton acceptor is the His102. The segment at residues 224-250 is a cross-link (tryptophyl-tyrosyl-methioninium (Tyr-Met) (with W-101)); it reads YVNPEGPNGNPDPIAAAKDIREVFARM. Heme b is bound at residue His265. A disordered region spans residues 351-373; sequence KGGAGAGTIPDAHDPSKRHAPSM.

Belongs to the peroxidase family. Peroxidase/catalase subfamily. Homodimer or homotetramer. Requires heme b as cofactor. In terms of processing, formation of the three residue Trp-Tyr-Met cross-link is important for the catalase, but not the peroxidase activity of the enzyme.

The enzyme catalyses H2O2 + AH2 = A + 2 H2O. It carries out the reaction 2 H2O2 = O2 + 2 H2O. Its function is as follows. Bifunctional enzyme with both catalase and broad-spectrum peroxidase activity. The chain is Catalase-peroxidase from Methanosarcina acetivorans (strain ATCC 35395 / DSM 2834 / JCM 12185 / C2A).